We begin with the raw amino-acid sequence, 435 residues long: Glutamyl-tRNA reductase (435 aa).

Substrate-binding positions include 49-52 (TCNR), Ser109, 114-116 (ETQ), and Gln120. Residue Cys50 is the Nucleophile of the active site. Position 189 to 194 (189 to 194 (GAGEMS)) interacts with NADP(+).

It belongs to the glutamyl-tRNA reductase family. In terms of assembly, homodimer.

The enzyme catalyses (S)-4-amino-5-oxopentanoate + tRNA(Glu) + NADP(+) = L-glutamyl-tRNA(Glu) + NADPH + H(+). It participates in porphyrin-containing compound metabolism; protoporphyrin-IX biosynthesis; 5-aminolevulinate from L-glutamyl-tRNA(Glu): step 1/2. Catalyzes the NADPH-dependent reduction of glutamyl-tRNA(Glu) to glutamate 1-semialdehyde (GSA). The polypeptide is Glutamyl-tRNA reductase (Listeria monocytogenes serotype 4b (strain CLIP80459)).